Reading from the N-terminus, the 210-residue chain is Syntaxin-binding protein 6 (210 aa).

Serine 2 is modified (N-acetylserine). A v-SNARE coiled-coil homology domain is found at 151–210 (GNSILHSAADSVTSAVQKASQALNERGERLGRAEEKTEDLKNSAQQFAETAHKLAMKHKC).

As to quaternary structure, part of a ternary complex containing SNAP25 and STX1A that can be dissociated by NAPA and NSF. Interacts with STX4A. Detected at low levels in brain, and at very low levels in heart, adrenal gland, testis, liver and kidney.

Its subcellular location is the cytoplasm. The protein resides in the membrane. Functionally, forms non-fusogenic complexes with SNAP25 and STX1A and may thereby modulate the formation of functional SNARE complexes and exocytosis. The polypeptide is Syntaxin-binding protein 6 (STXBP6) (Homo sapiens (Human)).